The sequence spans 192 residues: DNA dC-&gt;dU-editing enzyme APOBEC-3Ca (192 aa).

Residues 15–141 (IDPNTFRFHF…PNYQEGLCKL (127 aa)) enclose the CMP/dCMP-type deaminase domain. His69 provides a ligand contact to Zn(2+). The active-site Proton donor is the Glu71. 2 residues coordinate Zn(2+): Cys100 and Cys103.

It belongs to the cytidine and deoxycytidylate deaminase family. In terms of assembly, (Microbial infection) Interacts with feline foamy virus protein Bet. This interaction does not induce APOBEC3Ca degradation but prevents its dimerization and incorporation into the virion. Zn(2+) is required as a cofactor.

It localises to the nucleus. The protein localises to the cytoplasm. The catalysed reaction is a 2'-deoxycytidine in single-stranded DNA + H2O + H(+) = a 2'-deoxyuridine in single-stranded DNA + NH4(+). Functionally, DNA deaminase (cytidine deaminase) which acts as an inhibitor of retrovirus replication and retrotransposon mobility via deaminase-dependent and -independent mechanisms. Selectively targets single-stranded DNA and does not deaminate double-stranded DNA or single- or double-stranded RNA. Does not reduce infectivity of foamy feline virus, feline immunodeficiency virus or feline leukemia virus. The protein is DNA dC-&gt;dU-editing enzyme APOBEC-3Ca of Felis catus (Cat).